The following is a 411-amino-acid chain: Diels-Alderase ffsF (411 aa).

Positions M1–S17 are cleaved as a signal peptide.

This sequence belongs to the Diels-Alderase family.

Its pathway is mycotoxin biosynthesis. Functionally, diels-Alderase; part of the gene cluster that mediates the biosynthesis of the cytotoxic leucine-containing cytochalasans, including aspochalasin C, aspochalasin E, TMC-169, flavichalasine F, aspergillin PZ, aspochalasin M and flavichalasine G. The first step in the pathway is catalyzed by the hybrid PKS-NRPS ffsA that utilizes 8 units of malonyl-CoA to iteratively assemble the octaketide chain before addition of L-leucine by the C-terminal NRPS modules. Because ffsA lacks a designated enoylreductase (ER) domain, the required activity is provided the enoyl reductase fssC. The methyltransferase (MT) domain of ffsA catalyzes the alpha-methylation at C10 and C14 using S-adenosyl-L-methionine as the methyl-donating cosubstrate. Reduction by the hydrolyase ffsE, followed by dehydration and intra-molecular Diels-Alder cyclization by the Diels-Alderase ffsF then yield the required isoindolone-fused macrocycle. A number of oxidative steps catalyzed by the tailoring cytochrome P450 monooxygenase ffsD, the FAD-linked oxidoreductase ffsJ and the short-chain dehydrogenase/reductase ffsI, are further required to afford the final products. The polypeptide is Diels-Alderase ffsF (Aspergillus flavipes).